Here is an 819-residue protein sequence, read N- to C-terminus: MDKEKDHEVEWLEAQKIEISVDLLAAAKQHLLFLETVDRNRWLYDGPALEKAIYRYNACWLPLLVKYSESSSVSEGSLVPPLDCEWIWHCHRLNPVRYNSDCEQFYGRVLDNSGVLSSVDGNCKLKTEDLWKRLYPDEPYELDLDNIDLEDISEKSSALEKCTKYDLVSAVKRQSPFYYQVSRSHVNSDIFLQEAVARYKGFLYLIKMNRERSLKRFCVPTYDVDLIWHTHQLHPVSYCDDMVKLIGKVLEHDDTDSDRGKGKKLDTGFSKTTAQWEETFGTRYWKAGAMHRGKTPVPVTNSPYASDVLVKDPTAKDDFQNLIQFPEVEVVEVLLEIIGVRNLPDGHKGKVSVMFSKTQPDSLFNAERRLTILSEVGEKQVATFQCEPTGELVFKLISCSPSKIPVSREPKNLGFASLSLKEFLFPVITQLSVEKWLELTPSKGSQTDTKPISLRVAVSFTPPVRSPSVLHMVQSRPSCKGSCFFPIIGKSRLAKSSTHIVDETQTEVITLQIRNSADGGILKDDQRQVMGVTDSGETRVLAVYTGSFWSLLDSKWSLKQINASTADNPLFEILGPRVVKIFSGRKLDYEPKHCANLRSDLDFMTLVEFSKQHPYGKTVGLVDMRFGSIEAKENWLLLPGIVSAFILHTVLKKGGSEGFNVTTKDIKEESKQTKLVAATENNVNANSTNVETQTAITAPKKGSGCGGGCSGECGNMVKAANASGCGSSCSGECGDMVKSAANASGCGSGCSGECGNMVKAANASGGGYGARCKAAKASGCGGGCGGGCGGGCGDMVKSVNASGCGGGCNGECGNMVKAA.

In terms of biological role, plays a regulatory role in abscisic acid (ABA) signaling and tolerance to abiotic stress during germination. May be involved in the regulation of the ABI transcriptional factors. The chain is Glycine-rich domain-containing protein 1 from Arabidopsis thaliana (Mouse-ear cress).